Consider the following 83-residue polypeptide: Small ribosomal subunit protein uS17 (83 aa).

The protein belongs to the universal ribosomal protein uS17 family. Part of the 30S ribosomal subunit.

Its function is as follows. One of the primary rRNA binding proteins, it binds specifically to the 5'-end of 16S ribosomal RNA. This is Small ribosomal subunit protein uS17 from Pseudoalteromonas atlantica (strain T6c / ATCC BAA-1087).